Reading from the N-terminus, the 115-residue chain is ESX-1 secretion-associated protein EspL (115 aa).

In Mycobacterium tuberculosis (strain CDC 1551 / Oshkosh), this protein is ESX-1 secretion-associated protein EspL.